A 156-amino-acid chain; its full sequence is Small ribosomal subunit protein uS7 (156 aa).

The protein belongs to the universal ribosomal protein uS7 family. Part of the 30S ribosomal subunit. Contacts proteins S9 and S11.

In terms of biological role, one of the primary rRNA binding proteins, it binds directly to 16S rRNA where it nucleates assembly of the head domain of the 30S subunit. Is located at the subunit interface close to the decoding center, probably blocks exit of the E-site tRNA. The chain is Small ribosomal subunit protein uS7 from Methylocella silvestris (strain DSM 15510 / CIP 108128 / LMG 27833 / NCIMB 13906 / BL2).